The chain runs to 353 residues: Phospho-N-acetylmuramoyl-pentapeptide-transferase (353 aa).

10 consecutive transmembrane segments (helical) span residues 16–36 (YISV…MYLM), 64–84 (AGTP…ATVL), 88–108 (LNNF…LIGI), 130–150 (LIFQ…YGHS), 160–180 (FPLF…IVGS), 198–218 (SILA…AVFA), 228–248 (IAGE…AFLW), 256–276 (VFMG…LAIV), 281–301 (ILLL…ILQV), and 330–350 (KIIV…LLSL).

The protein belongs to the glycosyltransferase 4 family. MraY subfamily. The cofactor is Mg(2+).

Its subcellular location is the cell inner membrane. The catalysed reaction is UDP-N-acetyl-alpha-D-muramoyl-L-alanyl-gamma-D-glutamyl-meso-2,6-diaminopimeloyl-D-alanyl-D-alanine + di-trans,octa-cis-undecaprenyl phosphate = di-trans,octa-cis-undecaprenyl diphospho-N-acetyl-alpha-D-muramoyl-L-alanyl-D-glutamyl-meso-2,6-diaminopimeloyl-D-alanyl-D-alanine + UMP. It functions in the pathway cell wall biogenesis; peptidoglycan biosynthesis. Its function is as follows. Catalyzes the initial step of the lipid cycle reactions in the biosynthesis of the cell wall peptidoglycan: transfers peptidoglycan precursor phospho-MurNAc-pentapeptide from UDP-MurNAc-pentapeptide onto the lipid carrier undecaprenyl phosphate, yielding undecaprenyl-pyrophosphoryl-MurNAc-pentapeptide, known as lipid I. The chain is Phospho-N-acetylmuramoyl-pentapeptide-transferase from Aliarcobacter butzleri (strain RM4018) (Arcobacter butzleri).